The sequence spans 145 residues: Brain and acute leukemia cytoplasmic protein (145 aa).

The N-myristoyl glycine moiety is linked to residue Gly2. The S-palmitoyl cysteine moiety is linked to residue Cys3. Residues 3–35 (CGGSRADAIEPRYYESWTRETESTWLTYTDSDA) are interaction with CAMK2A. Positions 27-119 (WLTYTDSDAP…AKRDAKRMPA (93 aa)) are disordered. A compositionally biased stretch (low complexity) spans 32–46 (DSDAPPSAAAPDSGP). Over residues 83–108 (CETQCPNPQSLSSGPLTQKQNGLQTT) the composition is skewed to polar residues. Positions 109 to 119 (EAKRDAKRMPA) are enriched in basic and acidic residues.

Interacts with CAMK2A. In terms of processing, palmitoylation and myristoylation target the protein to the lipid rafts. In terms of tissue distribution, predominantly expressed in neuroectoderm-derived tissues. Expressed in the brain and spinal cord, and at low levels, in the adrenal gland. In the bone marrow, confined to the CD34+ progenitor cells. Not found in peripheral blood mononuclear cells, nor lymph nodes. Tends to be expressed at high levels in acute myeloid leukemia and glioblastoma cells.

It localises to the cytoplasm. The protein resides in the synapse. Its subcellular location is the synaptosome. It is found in the membrane raft. The protein localises to the postsynaptic density. Functionally, may play a synaptic role at the postsynaptic lipid rafts possibly through interaction with CAMK2A. The sequence is that of Brain and acute leukemia cytoplasmic protein from Homo sapiens (Human).